Here is a 316-residue protein sequence, read N- to C-terminus: Peptidoglycan hydrolase FlgJ (316 aa).

Positions 151–316 are catalytic; the sequence is DSKDFLARLS…TYSANLDNLF (166 aa). Active-site residues include Glu-223 and Asp-248.

It in the N-terminal section; belongs to the FlgJ family. The protein in the C-terminal section; belongs to the glycosyl hydrolase 73 family.

It is found in the periplasm. Flagellum-specific muramidase which hydrolyzes the peptidoglycan layer to assemble the rod structure in the periplasmic space. The sequence is that of Peptidoglycan hydrolase FlgJ (flgJ) from Salmonella typhimurium (strain LT2 / SGSC1412 / ATCC 700720).